The sequence spans 299 residues: Aliphatic sulfonates import ATP-binding protein SsuB (299 aa).

Residues 36–257 form the ABC transporter domain; that stretch reads LHVQQVIKRY…QHGSAAFAQI (222 aa). 68–75 contacts ATP; that stretch reads GRSGCGKS.

Belongs to the ABC transporter superfamily. Aliphatic sulfonates importer (TC 3.A.1.17.2) family. The complex is composed of two ATP-binding proteins (SsuB), two transmembrane proteins (SsuC) and a solute-binding protein (SsuA).

It localises to the cell inner membrane. The enzyme catalyses ATP + H2O + aliphatic sulfonate-[sulfonate-binding protein]Side 1 = ADP + phosphate + aliphatic sulfonateSide 2 + [sulfonate-binding protein]Side 1.. In terms of biological role, part of the ABC transporter complex SsuABC involved in aliphatic sulfonates import. Responsible for energy coupling to the transport system. In Cupriavidus pinatubonensis (strain JMP 134 / LMG 1197) (Cupriavidus necator (strain JMP 134)), this protein is Aliphatic sulfonates import ATP-binding protein SsuB.